The primary structure comprises 4545 residues: Prolow-density lipoprotein receptor-related protein 1 (4545 aa).

The signal sequence occupies residues 1–19 (MLTPPLLLLLPLLSALVAG). At 20 to 4424 (ATMDAPKTCS…SQQQPGHMTS (4405 aa)) the chain is on the extracellular side. LDL-receptor class A domains are found at residues 27–66 (TCSP…EICP) and 72–110 (RCPP…AHCR). 6 cysteine pairs are disulfide-bonded: Cys-28–Cys-41, Cys-35–Cys-54, Cys-48–Cys-65, Cys-73–Cys-86, Cys-80–Cys-99, and Cys-93–Cys-109. Asn-115, Asn-137, Asn-186, Asn-240, and Asn-275 each carry an N-linked (GlcNAc...) asparagine glycan. LDL-receptor class B repeat units lie at residues 293–335 (GNFY…DPAM), 336–379 (GKVF…DLVS), and 380–423 (RLVY…FENY). Asn-358 carries an N-linked (GlcNAc...) asparagine glycan. Asn-447 carries an N-linked (GlcNAc...) asparagine glycan. LDL-receptor class B repeat units lie at residues 572–614 (GFIY…DWMG), 615–660 (DNLY…DPLN), 661–711 (GWMY…DIPA), and 712–755 (GRLY…HGNY). An HAT 1 repeat occupies 639-671 (TRKTLIEGKMTHPRAIVVDPLNGWMYWTDWEED). Residue Asn-730 is glycosylated (N-linked (GlcNAc...) asparagine). 8 LDL-receptor class A domains span residues 854–892 (QCQP…ALCH), 895–933 (TCPS…ATCS), 936–973 (TCPP…ASCA), 976–1013 (TCFP…AGCS), 1015–1053 (SCSS…ANCT), 1062–1099 (GCHS…KGCE), 1104–1142 (VCDP…ENCE), and 1145–1184 (ACRP…ELCD). Disulfide bonds link Cys-855–Cys-867, Cys-862–Cys-880, Cys-874–Cys-891, Cys-896–Cys-908, Cys-903–Cys-921, Cys-915–Cys-932, Cys-937–Cys-949, Cys-944–Cys-962, Cys-956–Cys-972, Cys-977–Cys-990, Cys-985–Cys-1003, Cys-997–Cys-1012, Cys-1016–Cys-1028, Cys-1023–Cys-1041, Cys-1035–Cys-1052, Cys-1063–Cys-1076, Cys-1070–Cys-1089, Cys-1083–Cys-1098, Cys-1105–Cys-1119, Cys-1113–Cys-1132, Cys-1126–Cys-1141, Cys-1146–Cys-1160, Cys-1153–Cys-1173, and Cys-1167–Cys-1183. Ca(2+) contacts are provided by Trp-872, Asp-875, Asp-877, Asp-879, Asp-885, and Glu-886. N-linked (GlcNAc...) asparagine glycosylation occurs at Asn-929. Positions 1033, 1036, 1038, 1040, 1046, and 1047 each coordinate Ca(2+). A glycan (N-linked (GlcNAc...) asparagine) is linked at Asn-1051. The Ca(2+) site is built by Trp-1081, Asp-1084, Asp-1086, Asp-1088, Asp-1094, and Glu-1095. N-linked (GlcNAc...) asparagine glycosylation occurs at Asn-1156. 2 N-linked (GlcNAc...) asparagine glycosylation sites follow: Asn-1196 and Asn-1219. LDL-receptor class B repeat units lie at residues 1310 to 1356 (SALY…DWIA), 1357 to 1399 (GNIY…DPRD), 1400 to 1446 (GILF…DYLE), 1447 to 1491 (KRIL…YGGE), and 1492 to 1532 (VYWT…YHPS). HAT repeat units follow at residues 1380–1413 (TTLL…SLPR) and 1470–1503 (MEVL…NTLA). Residues Asn-1512, Asn-1559, Asn-1576, Asn-1617, and Asn-1646 are each glycosylated (N-linked (GlcNAc...) asparagine). 4 LDL-receptor class B repeats span residues 1628–1670 (QRVY…DWVS), 1671–1714 (RNLF…HPLR), 1715–1754 (GKLY…DFPE), and 1755–1799 (SKLY…MGDK). One copy of the HAT 4 repeat lies at 1653–1684 (VVSADLPNAHGLAVDWVSRNLFWTSYDTNKKQ). Asn-1724, Asn-1734, Asn-1764, Asn-1826, and Asn-1934 each carry an N-linked (GlcNAc...) asparagine glycan. 4 LDL-receptor class B repeats span residues 1935 to 1977 (DTIY…DWIA), 1978 to 2020 (GNIY…HPEK), 2021 to 2064 (GYLF…DYQG), and 2065 to 2108 (GKLY…FEDF). An N-linked (GlcNAc...) asparagine glycan is attached at Asn-1996. The residue at position 2010 (Lys-2010) is an N6-acetyllysine. N-linked (GlcNAc...) asparagine glycosylation occurs at Asn-2049. 2 N-linked (GlcNAc...) asparagine glycosylation sites follow: Asn-2118 and Asn-2128. 5 LDL-receptor class B repeats span residues 2254–2295 (NRIF…HRGW), 2296–2344 (DTLY…DECQ), 2345–2389 (NLMF…DHRA), 2390–2432 (EKLY…YGEH), and 2433–2474 (IFWT…VAND). 3 HAT repeats span residues 2277 to 2309 (TTIV…STIT), 2325 to 2358 (TVIT…LHPS), and 2411 to 2444 (HRYV…RAVQ). 3 N-linked (GlcNAc...) asparagine glycosylation sites follow: Asn-2473, Asn-2503, and Asn-2522. 7 consecutive LDL-receptor class A domains span residues 2524 to 2563 (SCRA…SYCN), 2566 to 2602 (RCKK…IPCN), 2605 to 2641 (ACGV…MNCS), 2639 to 2690 (NCSA…RDCP), 2696 to 2732 (RCPL…THCN), 2734 to 2771 (FCSE…AHCE), and 2774 to 2814 (TCGP…AGCL). Intrachain disulfides connect Cys-2525–Cys-2538, Cys-2533–Cys-2551, Cys-2545–Cys-2562, Cys-2567–Cys-2579, Cys-2574–Cys-2592, and Cys-2586–Cys-2601. Asn-2602 is a glycosylation site (N-linked (GlcNAc...) asparagine). Cystine bridges form between Cys-2606–Cys-2618, Cys-2613–Cys-2631, Cys-2625–Cys-2640, Cys-2640–Cys-2667, Cys-2645–Cys-2680, Cys-2674–Cys-2689, Cys-2697–Cys-2709, Cys-2704–Cys-2722, Cys-2716–Cys-2731, Cys-2735–Cys-2747, Cys-2742–Cys-2760, Cys-2754–Cys-2770, Cys-2775–Cys-2788, Cys-2782–Cys-2801, and Cys-2795–Cys-2813. 2 N-linked (GlcNAc...) asparagine glycosylation sites follow: Asn-2621 and Asn-2639. A glycan (N-linked (GlcNAc...) asparagine) is linked at Asn-2816. LDL-receptor class A domains lie at 2818–2855 (TCDD…PECE), 2858–2899 (TCGP…PHCT), and 2904–2941 (KCNA…RGCH). Disulfide bonds link Cys-2819–Cys-2831, Cys-2826–Cys-2844, Cys-2838–Cys-2854, Cys-2859–Cys-2871, Cys-2866–Cys-2885, Cys-2879–Cys-2898, Cys-2905–Cys-2918, Cys-2913–Cys-2931, Cys-2925–Cys-2940, Cys-2987–Cys-2997, and Cys-2993–Cys-3006. Asn-2906 carries an N-linked (GlcNAc...) asparagine glycan. The EGF-like 1; calcium-binding domain maps to 2983–3018 (DVDECSTTFPCSQLCINTHGSYKCLCVEGYAPRGGD). Residues Asn-3049 and Asn-3090 are each glycosylated (N-linked (GlcNAc...) asparagine). LDL-receptor class B repeat units follow at residues 3070–3114 (QMIY…DWVG), 3115–3157 (GNLY…DVQN), 3158–3201 (GYLY…DYVT), 3202–3244 (ERIY…FEDY), and 3245–3285 (VYWT…FHAL). HAT repeat units follow at residues 3128–3171 (EVSK…HSLI) and 3224–3256 (RHVV…KSIN). Asn-3265 and Asn-3334 each carry an N-linked (GlcNAc...) asparagine glycan. 11 consecutive LDL-receptor class A domains span residues 3334–3371 (NCTA…PDCP), 3374–3410 (KCRP…ANCD), 3413–3450 (VCLP…RDCP), 3453–3491 (TCAP…ANCT), 3494–3533 (TCGV…EECD), 3536–3572 (TCEP…ESCT), 3575–3611 (PCSE…KDCT), 3613–3649 (RCDM…EACG), 3654–3692 (TCPL…EECT), 3695–3733 (QCPP…EDCE), and 3741–3778 (HCKD…EDCS). Intrachain disulfides connect Cys-3335–Cys-3347, Cys-3342–Cys-3360, Cys-3354–Cys-3370, Cys-3375–Cys-3387, Cys-3382–Cys-3400, Cys-3394–Cys-3409, Cys-3414–Cys-3427, Cys-3421–Cys-3440, Cys-3434–Cys-3449, Cys-3454–Cys-3467, Cys-3461–Cys-3480, Cys-3474–Cys-3490, Cys-3495–Cys-3508, Cys-3502–Cys-3521, Cys-3515–Cys-3532, Cys-3537–Cys-3549, Cys-3544–Cys-3562, Cys-3556–Cys-3571, Cys-3576–Cys-3588, Cys-3583–Cys-3601, Cys-3595–Cys-3610, Cys-3614–Cys-3626, Cys-3621–Cys-3639, Cys-3633–Cys-3648, Cys-3655–Cys-3667, Cys-3662–Cys-3680, Cys-3674–Cys-3691, Cys-3696–Cys-3710, Cys-3704–Cys-3723, Cys-3717–Cys-3732, Cys-3742–Cys-3755, Cys-3750–Cys-3768, and Cys-3762–Cys-3777. N-linked (GlcNAc...) asparagine glycosylation occurs at Asn-3489. Asn-3663 is a glycosylation site (N-linked (GlcNAc...) asparagine). Asn-3789 and Asn-3840 each carry an N-linked (GlcNAc...) asparagine glycan. The stretch at 3913–3925 (GRVYWTNWHTGTI) is one LDL-receptor class B 31 repeat. An N-linked (GlcNAc...) asparagine glycan is attached at Asn-3954. LDL-receptor class B repeat units follow at residues 3971 to 4013 (GNVY…DPLR), 4014 to 4057 (GTMY…DYHN), and 4058 to 4102 (ERLY…FEDY). The stretch at 3995–4027 (TLISGMIDEPHAIVVDPLRGTMYWSDWGNHPKI) is one HAT 10 repeat. Asn-4076, Asn-4126, and Asn-4180 each carry an N-linked (GlcNAc...) asparagine glycan. 4 EGF-like domains span residues 4197–4230 (RPGT…YTGD), 4233–4269 (ELDQ…PRCT), 4270–4302 (QQVC…FLGD), and 4305–4341 (QYRQ…TRCE). 10 disulfides stabilise this stretch: Cys-4201–Cys-4211, Cys-4205–Cys-4221, Cys-4237–Cys-4247, Cys-4241–Cys-4257, Cys-4259–Cys-4268, Cys-4273–Cys-4283, Cys-4277–Cys-4293, Cys-4309–Cys-4319, Cys-4313–Cys-4329, and Cys-4331–Cys-4340. N-linked (GlcNAc...) asparagine glycosylation is present at Asn-4280. Residue Asn-4365 is glycosylated (N-linked (GlcNAc...) asparagine). The region spanning 4376-4410 (LTCIDHCSNGGSCTMNSKMMPECQCPPHMTGPRCE) is the EGF-like 6 domain. Cystine bridges form between Cys-4378–Cys-4388, Cys-4382–Cys-4398, and Cys-4400–Cys-4409. Residues 4425–4445 (ILIPLLLLLLLLLVAGVVFWY) traverse the membrane as a helical segment. Residues 4446 to 4545 (KRRVRGAKGF…PEDEIGDPLA (100 aa)) lie on the Cytoplasmic side of the membrane. The tract at residues 4446-4545 (KRRVRGAKGF…PEDEIGDPLA (100 aa)) is interaction with MAFB. A Phosphothreonine modification is found at Thr-4461. Position 4508 is a phosphotyrosine (Tyr-4508). Phosphoserine occurs at positions 4518, 4521, and 4524.

It belongs to the LDLR family. Heterodimer of an 85-kDa membrane-bound carboxyl subunit and a non-covalently attached 515-kDa N-terminal subunit. Intracellular domain interacts with MAFB. Found in a complex with PID1/PCLI1, LRP1 and CUBNI. Interacts with SNX17, PID1/PCLI1, PDGF and CUBN. The intracellular domain interacts with SHC1, GULP1 and DAB1. Can weakly interact (via NPXY motif) with DAB2 (via PID domain); the interaction is enhanced by tyrosine phosphorylation of the NPXY motif. Interacts with MDK; promotes neuronal survival. Interacts with LRPAP1; this interaction is followed by rapid internalization. Interacts with uPA/PLAU and PAI1/SERPINE1, either individually or in complex with each other, leading to rapid endocytosis; this interaction is abolished in the presence of LRPAP1/RAP. Also interacts with tPA/PLAT alone or in complex with SERPINE1. Interacts with the urokinase receptor PLAUR; this interaction leads to PLAUR internalization and is impaired in the presence of SORL1. Interacts with PDGFB. Interacts with TAU/MAPT, leading to endocytosis; this interaction is reduced in the presence of LRPAP1/RAP. Interacts with IGFBP3. Interacts with ADGRG6. Post-translationally, cleaved into a 85 kDa membrane-spanning subunit (LRP-85) and a 515 kDa large extracellular domain (LRP-515) that remains non-covalently associated. Gamma-secretase-dependent cleavage of LRP-85 releases the intracellular domain from the membrane. In terms of processing, phosphorylated on serine and threonine residues. Phosphorylated on tyrosine residues upon stimulation with PDGF. Tyrosine phosphorylation promotes interaction with SHC1.

The protein localises to the cell membrane. It localises to the membrane. It is found in the coated pit. The protein resides in the golgi outpost. Its subcellular location is the cytoplasm. The protein localises to the cytoskeleton. It localises to the microtubule organizing center. It is found in the nucleus. Endocytic receptor involved in endocytosis and in phagocytosis of apoptotic cells. Required for early embryonic development. Involved in cellular lipid homeostasis. Involved in the plasma clearance of chylomicron remnants and activated LRPAP1 (alpha 2-macroglobulin), as well as the local metabolism of complexes between plasminogen activators and their endogenous inhibitors. Acts as an LRPAP1 alpha-2-macroglobulin receptor. Acts as a TAU/MAPT receptor and controls the endocytosis of TAU/MAPT as well as its subsequent spread. May modulate cellular events, such as APP metabolism, kinase-dependent intracellular signaling, neuronal calcium signaling as well as neurotransmission. Also acts as a receptor for IGFBP3 to mediate cell growth inhibition. This is Prolow-density lipoprotein receptor-related protein 1 from Rattus norvegicus (Rat).